The sequence spans 99 residues: DNA-directed RNA polymerase subunit omega (99 aa).

Belongs to the RNA polymerase subunit omega family. As to quaternary structure, the RNAP catalytic core consists of 2 alpha, 1 beta, 1 beta' and 1 omega subunit. When a sigma factor is associated with the core the holoenzyme is formed, which can initiate transcription.

It carries out the reaction RNA(n) + a ribonucleoside 5'-triphosphate = RNA(n+1) + diphosphate. Its function is as follows. Promotes RNA polymerase assembly. Latches the N- and C-terminal regions of the beta' subunit thereby facilitating its interaction with the beta and alpha subunits. This chain is DNA-directed RNA polymerase subunit omega (rpoZ), found in Deinococcus radiodurans (strain ATCC 13939 / DSM 20539 / JCM 16871 / CCUG 27074 / LMG 4051 / NBRC 15346 / NCIMB 9279 / VKM B-1422 / R1).